Reading from the N-terminus, the 428-residue chain is GTPase Obg (428 aa).

An Obg domain is found at 1-158; it reads MFVDQVKVYV…RYIVLELKVL (158 aa). Residues 117 to 143 form a disordered region; that stretch reads ARGGRGGRGNSRFATPANPAPQLSENG. In terms of domain architecture, OBG-type G spans 159–329; sequence ADVGLVGFPS…LLFEVANQLE (171 aa). Residues 165-172, 190-194, 212-215, 282-285, and 310-312 contribute to the GTP site; these read GFPSVGKS, FTTLV, DLPG, NKMD, and SAV. The Mg(2+) site is built by Ser-172 and Thr-192. Residues 350–428 enclose the OCT domain; it reads TMENEEVPFN…LLEFEFEFID (79 aa).

It belongs to the TRAFAC class OBG-HflX-like GTPase superfamily. OBG GTPase family. In terms of assembly, monomer. Interacts with TasA (AC P54507) in pull-down experiments. Mg(2+) serves as cofactor.

It is found in the cytoplasm. With respect to regulation, inhibited by GDP; less than 20 uM ppGpp stimulates the GTPase, while higher concentrations inhibit. Functionally, necessary for the transition from vegetative growth to stage 0 or stage II of sporulation, but sporulation subsequent to these stages is unaffected at 45 degrees Celsius. This ts effect is probably due solely to the E-79 mutation. Required for expression of early sporulation genes, further suggesting a role in the induction of sporulation. Depletion effects on sporulation can be partially suppressed by missense mutations in spo0A. Strains depleted for obg stop growing after about 3 hours and do not induce the sigma-B factor following ethanol stress. It cofractionates with the ribosome and upstream stress response regulators RsbR, RsbS and RsbT in size fractionation columns, suggesting the ribosome might serve as a possible mediator of the activity of obg and the stress induction of sigma-B. In glycerol gradients partially associates with ribosomes; this is stabilized by a nonhydrolyzable GTP-analog and to a lesser extent GTP and GDP. An essential GTPase which binds GTP, GDP and possibly (p)ppGpp with moderate affinity, with high nucleotide exchange rates and a fairly low GTP hydrolysis rate. Plays a role in control of the cell cycle, stress response, ribosome biogenesis and in those bacteria that undergo differentiation, in morphogenesis control. The sequence is that of GTPase Obg from Bacillus subtilis (strain 168).